Reading from the N-terminus, the 180-residue chain is Large ribosomal subunit protein uL5 (180 aa).

The protein belongs to the universal ribosomal protein uL5 family. Part of the 50S ribosomal subunit; part of the 5S rRNA/L5/L18/L25 subcomplex. Contacts the 5S rRNA and the P site tRNA. Forms a bridge to the 30S subunit in the 70S ribosome.

In terms of biological role, this is one of the proteins that bind and probably mediate the attachment of the 5S RNA into the large ribosomal subunit, where it forms part of the central protuberance. In the 70S ribosome it contacts protein S13 of the 30S subunit (bridge B1b), connecting the 2 subunits; this bridge is implicated in subunit movement. Contacts the P site tRNA; the 5S rRNA and some of its associated proteins might help stabilize positioning of ribosome-bound tRNAs. In Mycoplasma mycoides subsp. mycoides SC (strain CCUG 32753 / NCTC 10114 / PG1), this protein is Large ribosomal subunit protein uL5.